The primary structure comprises 446 residues: GTPase Der (446 aa).

EngA-type G domains follow at residues 3 to 168 and 181 to 354; these read PVIA…YAGQ and IKIA…KAAM. GTP is bound by residues 9-16, 57-61, 120-123, 187-194, 234-238, and 299-302; these read GRPNVGKS, DTGGF, NKAE, DTAGL, and NKWD. The 85-residue stretch at 355-439 folds into the KH-like domain; that stretch reads SKLPTPKLTR…PLRIEFRSST (85 aa).

Belongs to the TRAFAC class TrmE-Era-EngA-EngB-Septin-like GTPase superfamily. EngA (Der) GTPase family. As to quaternary structure, associates with the 50S ribosomal subunit.

Functionally, GTPase that plays an essential role in the late steps of ribosome biogenesis. In Paraburkholderia phymatum (strain DSM 17167 / CIP 108236 / LMG 21445 / STM815) (Burkholderia phymatum), this protein is GTPase Der.